We begin with the raw amino-acid sequence, 88 residues long: Small ribosomal subunit protein bS20 (88 aa).

Disordered regions lie at residues 1-23 (MANT…VNKA) and 65-88 (GVMH…SLSA).

The protein belongs to the bacterial ribosomal protein bS20 family.

Its function is as follows. Binds directly to 16S ribosomal RNA. The protein is Small ribosomal subunit protein bS20 of Rhizobium meliloti (strain 1021) (Ensifer meliloti).